Here is a 105-residue protein sequence, read N- to C-terminus: Large ribosomal subunit protein bL21 (105 aa).

It belongs to the bacterial ribosomal protein bL21 family. In terms of assembly, part of the 50S ribosomal subunit. Contacts protein L20.

In terms of biological role, this protein binds to 23S rRNA in the presence of protein L20. The polypeptide is Large ribosomal subunit protein bL21 (Rhizobium rhizogenes (strain K84 / ATCC BAA-868) (Agrobacterium radiobacter)).